The following is a 344-amino-acid chain: rRNA 2'-O-methyltransferase fibrillarin (344 aa).

Positions 1-113 (MGKPGFSPRG…GFKGGKTVTI (113 aa)) are disordered. Residues 8–107 (PRGGGGGGGG…RGGGAGGFKG (100 aa)) show a composition bias toward gly residues. Asymmetric dimethylarginine occurs at positions 9, 23, 25, 40, 42, 48, 51, 58, 63, 71, 77, 83, 88, 93, and 98. Residues 197–198 (TT), 216–217 (EF), 241–242 (DA), and 261–264 (DVAQ) each bind S-adenosyl-L-methionine.

This sequence belongs to the methyltransferase superfamily. Fibrillarin family. Component of box C/D small nucleolar ribonucleoprotein (snoRNP) particles. It is associated with the U3, U8 and U13 small nuclear RNAs. Post-translationally, by homology to other fibrillarins, some or all of the N-terminal domain arginines are modified to asymmetric dimethylarginine (DMA).

The protein resides in the nucleus. It localises to the nucleolus. It carries out the reaction L-glutaminyl-[histone H2A] + S-adenosyl-L-methionine = N(5)-methyl-L-glutaminyl-[histone H2A] + S-adenosyl-L-homocysteine + H(+). Its function is as follows. S-adenosyl-L-methionine-dependent methyltransferase that has the ability to methylate both RNAs and proteins. Involved in pre-rRNA processing. Utilizes the methyl donor S-adenosyl-L-methionine to catalyze the site-specific 2'-hydroxyl methylation of ribose moieties in pre-ribosomal RNA. Site specificity is provided by a guide RNA that base pairs with the substrate. Methylation occurs at a characteristic distance from the sequence involved in base pairing with the guide RNA. Also acts as a protein methyltransferase by mediating methylation of 'Gln-105' of histone H2A (H2AQ105me), a modification that impairs binding of the FACT complex and is specifically present at 35S ribosomal DNA locus. This chain is rRNA 2'-O-methyltransferase fibrillarin, found in Drosophila melanogaster (Fruit fly).